The sequence spans 876 residues: Alanine--tRNA ligase (876 aa).

Zn(2+) is bound by residues His-565, His-569, Cys-667, and His-671.

This sequence belongs to the class-II aminoacyl-tRNA synthetase family. The cofactor is Zn(2+).

It localises to the cytoplasm. The catalysed reaction is tRNA(Ala) + L-alanine + ATP = L-alanyl-tRNA(Ala) + AMP + diphosphate. Catalyzes the attachment of alanine to tRNA(Ala) in a two-step reaction: alanine is first activated by ATP to form Ala-AMP and then transferred to the acceptor end of tRNA(Ala). Also edits incorrectly charged Ser-tRNA(Ala) and Gly-tRNA(Ala) via its editing domain. The protein is Alanine--tRNA ligase of Staphylococcus aureus (strain bovine RF122 / ET3-1).